The primary structure comprises 251 residues: 3-deoxy-manno-octulosonate cytidylyltransferase (251 aa).

This sequence belongs to the KdsB family.

It localises to the cytoplasm. It catalyses the reaction 3-deoxy-alpha-D-manno-oct-2-ulosonate + CTP = CMP-3-deoxy-beta-D-manno-octulosonate + diphosphate. The protein operates within nucleotide-sugar biosynthesis; CMP-3-deoxy-D-manno-octulosonate biosynthesis; CMP-3-deoxy-D-manno-octulosonate from 3-deoxy-D-manno-octulosonate and CTP: step 1/1. It functions in the pathway bacterial outer membrane biogenesis; lipopolysaccharide biosynthesis. Activates KDO (a required 8-carbon sugar) for incorporation into bacterial lipopolysaccharide in Gram-negative bacteria. This chain is 3-deoxy-manno-octulosonate cytidylyltransferase, found in Rhizobium leguminosarum bv. trifolii (strain WSM2304).